A 577-amino-acid polypeptide reads, in one-letter code: Protein NUCLEOLAR COMPLEX ASSOCIATED 4 (577 aa).

Positions 230–263 (PEKQAEKSQHEMWSGSDESISEKPTDKKKKTEKG) are disordered. 3 helical membrane passes run 329–349 (IGGV…TQHG), 350–370 (LEYP…VFVA), and 404–424 (LSLS…YNLL).

The protein belongs to the CBF/MAK21 family. As to quaternary structure, component of the ribosomal small subunit (SSU) processome composed of at least 40 protein subunits and snoRNA U3. In terms of tissue distribution, mostly expressed in flowers and stems and at lower levels in roots, hypocotyls, siliques, leaves and seeds.

The protein resides in the nucleus membrane. It localises to the nucleus. It is found in the nucleolus. Functionally, essential protein required during embryogenesis. Involved in nucleolar processing of ribosomal RNA (rRNA) 40S and 90S ribosomal subunits and ribosome assembly; early in ribosome biogenesis, especially required during the maturation of 5.8S rRNA. Has a role in the nuclear export of 40S pre-ribosomal subunit to the cytoplasm. In Arabidopsis thaliana (Mouse-ear cress), this protein is Protein NUCLEOLAR COMPLEX ASSOCIATED 4.